The sequence spans 250 residues: Cysteine proteinase inhibitor 12 (250 aa).

Residues 1-32 form the signal peptide; that stretch reads MRVAATTRPASSSAAAPLPLFLLLAVAAAAAA. 2 consecutive Cystatin domains span residues 49-137 and 156-202; these read GGAH…RNTG and PGWR…AEVV. A Secondary area of contact motif is present at residues 93-97; the sequence is QVVAG.

The protein belongs to the cystatin family. Phytocystatin subfamily.

Its subcellular location is the secreted. Functionally, specific inhibitor of cysteine proteinases. Probably involved in the regulation of endogenous processes and in defense against pests and pathogens. This chain is Cysteine proteinase inhibitor 12, found in Oryza sativa subsp. japonica (Rice).